The following is a 366-amino-acid chain: Ribosomal RNA large subunit methyltransferase M (366 aa).

S-adenosyl-L-methionine-binding positions include Ser188, 221-224, Asp240, Asp260, and Asp277; that span reads CPGG. The active-site Proton acceptor is the Lys306.

The protein belongs to the class I-like SAM-binding methyltransferase superfamily. RNA methyltransferase RlmE family. RlmM subfamily. As to quaternary structure, monomer.

Its subcellular location is the cytoplasm. The catalysed reaction is cytidine(2498) in 23S rRNA + S-adenosyl-L-methionine = 2'-O-methylcytidine(2498) in 23S rRNA + S-adenosyl-L-homocysteine + H(+). Functionally, catalyzes the 2'-O-methylation at nucleotide C2498 in 23S rRNA. The sequence is that of Ribosomal RNA large subunit methyltransferase M from Klebsiella pneumoniae subsp. pneumoniae (strain ATCC 700721 / MGH 78578).